Here is a 259-residue protein sequence, read N- to C-terminus: Deoxyribose-phosphate aldolase (259 aa).

Catalysis depends on Asp102, which acts as the Proton donor/acceptor. The active-site Schiff-base intermediate with acetaldehyde is Lys167. The active-site Proton donor/acceptor is Lys201.

Belongs to the DeoC/FbaB aldolase family. DeoC type 2 subfamily.

The protein localises to the cytoplasm. The catalysed reaction is 2-deoxy-D-ribose 5-phosphate = D-glyceraldehyde 3-phosphate + acetaldehyde. It functions in the pathway carbohydrate degradation; 2-deoxy-D-ribose 1-phosphate degradation; D-glyceraldehyde 3-phosphate and acetaldehyde from 2-deoxy-alpha-D-ribose 1-phosphate: step 2/2. In terms of biological role, catalyzes a reversible aldol reaction between acetaldehyde and D-glyceraldehyde 3-phosphate to generate 2-deoxy-D-ribose 5-phosphate. This is Deoxyribose-phosphate aldolase from Serratia proteamaculans (strain 568).